The sequence spans 289 residues: ATP synthase subunit a (289 aa).

6 helical membrane-spanning segments follow: residues 43–63 (AFHV…VLLF), 103–123 (VIAP…AVDL), 160–180 (FSVF…GGFI), 193–213 (IFVQ…TLIA), 232–252 (VFIL…GLGV), and 259–279 (AVFH…LTIV).

It belongs to the ATPase A chain family. In terms of assembly, F-type ATPases have 2 components, CF(1) - the catalytic core - and CF(0) - the membrane proton channel. CF(1) has five subunits: alpha(3), beta(3), gamma(1), delta(1), epsilon(1). CF(0) has three main subunits: a(1), b(2) and c(9-12). The alpha and beta chains form an alternating ring which encloses part of the gamma chain. CF(1) is attached to CF(0) by a central stalk formed by the gamma and epsilon chains, while a peripheral stalk is formed by the delta and b chains.

Its subcellular location is the cell inner membrane. Functionally, key component of the proton channel; it plays a direct role in the translocation of protons across the membrane. In Pseudomonas fluorescens (strain Pf0-1), this protein is ATP synthase subunit a.